Consider the following 565-residue polypeptide: Glucose-6-phosphate isomerase (565 aa).

Glu-373 (proton donor) is an active-site residue. Catalysis depends on residues His-404 and Lys-530.

It belongs to the GPI family.

The protein localises to the cytoplasm. The catalysed reaction is alpha-D-glucose 6-phosphate = beta-D-fructose 6-phosphate. Its pathway is carbohydrate biosynthesis; gluconeogenesis. It participates in carbohydrate degradation; glycolysis; D-glyceraldehyde 3-phosphate and glycerone phosphate from D-glucose: step 2/4. Catalyzes the reversible isomerization of glucose-6-phosphate to fructose-6-phosphate. The sequence is that of Glucose-6-phosphate isomerase from Corynebacterium jeikeium (strain K411).